The following is a 264-amino-acid chain: MALGKNKRISKGGKRGKRGKAQETMARKEWYDVVAPANFEKRQFAKTICNKTQGTRIAADVLRGRVFEANLADLNQSAGEEEAYRKVRFTVQEVQGRNLLTQFHSMEVTTDKMASLLRKWCTTMETTVEVKTADGYTMRLFVVAFTKPQANQQSRNCYAKQRLVKWLRMRITKMIKRRLSKVQIKEAVSLLTRNVLSDALVRRCNPILPLRELRIRKVRVVRTPKFDAQALLSAHGTIPASVEADQREVEEAVEAAPAAEKAAE.

The span at 1 to 19 (MALGKNKRISKGGKRGKRG) shows a compositional bias: basic residues. The segment at 1-23 (MALGKNKRISKGGKRGKRGKAQE) is disordered.

It belongs to the eukaryotic ribosomal protein eS1 family. As to quaternary structure, component of the small ribosomal subunit. Mature ribosomes consist of a small (40S) and a large (60S) subunit. The 40S subunit contains about 33 different proteins and 1 molecule of RNA (18S). The 60S subunit contains about 49 different proteins and 3 molecules of RNA (25S, 5.8S and 5S).

It localises to the cytoplasm. This is Small ribosomal subunit protein eS1B from Leishmania infantum.